The following is a 356-amino-acid chain: GTPase Obg (356 aa).

The region spanning 1–158 (MFIDSVKITL…RLVRLELKLI (158 aa)) is the Obg domain. In terms of domain architecture, OBG-type G spans 159–339 (ADVGLVGFPN…LKFMLLEEIK (181 aa)). GTP contacts are provided by residues 165 to 172 (GFPNVGKS), 190 to 194 (FTTLT), 212 to 215 (DIPG), 280 to 283 (SKSD), and 320 to 322 (SSL). Mg(2+)-binding residues include S172 and T192.

The protein belongs to the TRAFAC class OBG-HflX-like GTPase superfamily. OBG GTPase family. As to quaternary structure, monomer. It depends on Mg(2+) as a cofactor.

The protein resides in the cytoplasm. In terms of biological role, an essential GTPase which binds GTP, GDP and possibly (p)ppGpp with moderate affinity, with high nucleotide exchange rates and a fairly low GTP hydrolysis rate. Plays a role in control of the cell cycle, stress response, ribosome biogenesis and in those bacteria that undergo differentiation, in morphogenesis control. In Campylobacter jejuni subsp. jejuni serotype O:23/36 (strain 81-176), this protein is GTPase Obg.